The chain runs to 461 residues: Bifunctional enzyme LpxC/FabZ (461 aa).

The UDP-3-O-acyl-N-acetylglucosamine deacetylase stretch occupies residues 1 to 302; that stretch reads MLKQKTLKDS…FARQMRKEIR (302 aa). Residues histidine 78, histidine 260, and aspartate 264 each coordinate Zn(2+). Histidine 287 (proton donor) is an active-site residue. Residues 303–461 are 3-hydroxyacyl-[acyl-carrier-protein] dehydratase; it reads LHEIQAPTYD…EFMAQIVKNK (159 aa). Histidine 364 is a catalytic residue.

It in the N-terminal section; belongs to the LpxC family. In the C-terminal section; belongs to the thioester dehydratase family. The cofactor is Zn(2+).

The protein resides in the cytoplasm. The enzyme catalyses a UDP-3-O-[(3R)-3-hydroxyacyl]-N-acetyl-alpha-D-glucosamine + H2O = a UDP-3-O-[(3R)-3-hydroxyacyl]-alpha-D-glucosamine + acetate. It catalyses the reaction a (3R)-hydroxyacyl-[ACP] = a (2E)-enoyl-[ACP] + H2O. It participates in glycolipid biosynthesis; lipid IV(A) biosynthesis; lipid IV(A) from (3R)-3-hydroxytetradecanoyl-[acyl-carrier-protein] and UDP-N-acetyl-alpha-D-glucosamine: step 2/6. In terms of biological role, catalyzes the hydrolysis of UDP-3-O-myristoyl-N-acetylglucosamine to form UDP-3-O-myristoylglucosamine and acetate, the committed step in lipid A biosynthesis. Functionally, involved in unsaturated fatty acids biosynthesis. Catalyzes the dehydration of short chain beta-hydroxyacyl-ACPs and long chain saturated and unsaturated beta-hydroxyacyl-ACPs. The polypeptide is Bifunctional enzyme LpxC/FabZ (lpxC/fabZ) (Bacteroides thetaiotaomicron (strain ATCC 29148 / DSM 2079 / JCM 5827 / CCUG 10774 / NCTC 10582 / VPI-5482 / E50)).